Here is a 160-residue protein sequence, read N- to C-terminus: 6,7-dimethyl-8-ribityllumazine synthase (160 aa).

5-amino-6-(D-ribitylamino)uracil-binding positions include Phe32, 66-68 (ALE), and 90-92 (CII). Residue 95–96 (ET) participates in (2S)-2-hydroxy-3-oxobutyl phosphate binding. The active-site Proton donor is the His98. Asn123 is a binding site for 5-amino-6-(D-ribitylamino)uracil. Arg137 is a binding site for (2S)-2-hydroxy-3-oxobutyl phosphate.

Belongs to the DMRL synthase family.

It carries out the reaction (2S)-2-hydroxy-3-oxobutyl phosphate + 5-amino-6-(D-ribitylamino)uracil = 6,7-dimethyl-8-(1-D-ribityl)lumazine + phosphate + 2 H2O + H(+). Its pathway is cofactor biosynthesis; riboflavin biosynthesis; riboflavin from 2-hydroxy-3-oxobutyl phosphate and 5-amino-6-(D-ribitylamino)uracil: step 1/2. In terms of biological role, catalyzes the formation of 6,7-dimethyl-8-ribityllumazine by condensation of 5-amino-6-(D-ribitylamino)uracil with 3,4-dihydroxy-2-butanone 4-phosphate. This is the penultimate step in the biosynthesis of riboflavin. The sequence is that of 6,7-dimethyl-8-ribityllumazine synthase from Methylibium petroleiphilum (strain ATCC BAA-1232 / LMG 22953 / PM1).